The sequence spans 308 residues: Glutaminase (308 aa).

Positions 66, 117, 161, 168, 192, 244, and 262 each coordinate substrate.

It belongs to the glutaminase family. In terms of assembly, homotetramer.

It catalyses the reaction L-glutamine + H2O = L-glutamate + NH4(+). The sequence is that of Glutaminase from Proteus mirabilis (strain HI4320).